Here is a 311-residue protein sequence, read N- to C-terminus: DNA replication terminus site-binding protein (311 aa).

Belongs to the Tus family.

The protein localises to the cytoplasm. Trans-acting protein required for termination of DNA replication. Binds to DNA replication terminator sequences (terA to terF) to prevent the passage of replication forks. The termination efficiency will be affected by the affinity of this protein for the terminator sequence. The protein is DNA replication terminus site-binding protein of Yersinia pestis.